A 347-amino-acid polypeptide reads, in one-letter code: UDP-3-O-acylglucosamine N-acyltransferase 1 (347 aa).

H246 (proton acceptor) is an active-site residue.

The protein belongs to the transferase hexapeptide repeat family. LpxD subfamily. Homotrimer.

The enzyme catalyses a UDP-3-O-[(3R)-3-hydroxyacyl]-alpha-D-glucosamine + a (3R)-hydroxyacyl-[ACP] = a UDP-2-N,3-O-bis[(3R)-3-hydroxyacyl]-alpha-D-glucosamine + holo-[ACP] + H(+). The protein operates within bacterial outer membrane biogenesis; LPS lipid A biosynthesis. Catalyzes the N-acylation of UDP-3-O-acylglucosamine using 3-hydroxyacyl-ACP as the acyl donor. Is involved in the biosynthesis of lipid A, a phosphorylated glycolipid that anchors the lipopolysaccharide to the outer membrane of the cell. The polypeptide is UDP-3-O-acylglucosamine N-acyltransferase 1 (Francisella tularensis subsp. holarctica (strain LVS)).